Here is a 64-residue protein sequence, read N- to C-terminus: Cytochrome b-c1 complex subunit 9 (64 aa).

At 2–18 (SSPTIPSRLYSLLFRRT) the chain is on the mitochondrial matrix side. Residues 19-43 (STFALTIAVGALFFERAFDQGADAI) traverse the membrane as a helical segment. The Mitochondrial intermembrane segment spans residues 44-63 (YEHINEGKLWKHIKHKYENK).

The protein belongs to the UQCR10/QCR9 family. As to quaternary structure, component of the ubiquinol-cytochrome c oxidoreductase (cytochrome b-c1 complex, complex III, CIII), a multisubunit enzyme composed of 11 subunits. The complex is composed of 3 respiratory subunits cytochrome b, cytochrome c1 and Rieske protein UQCRFS1, 2 core protein subunits UQCRC1/QCR1 and UQCRC2/QCR2, and 6 low-molecular weight protein subunits UQCRH/QCR6, UQCRB/QCR7, UQCRQ/QCR8, UQCR10/QCR9, UQCR11/QCR10 and subunit 9, the cleavage product of Rieske protein UQCRFS1. The complex exists as an obligatory dimer and forms supercomplexes (SCs) in the inner mitochondrial membrane with NADH-ubiquinone oxidoreductase (complex I, CI) and cytochrome c oxidase (complex IV, CIV), resulting in different assemblies (supercomplex SCI(1)III(2)IV(1) and megacomplex MCI(2)III(2)IV(2)). Interacts with STMP1.

It localises to the mitochondrion inner membrane. Component of the ubiquinol-cytochrome c oxidoreductase, a multisubunit transmembrane complex that is part of the mitochondrial electron transport chain which drives oxidative phosphorylation. The respiratory chain contains 3 multisubunit complexes succinate dehydrogenase (complex II, CII), ubiquinol-cytochrome c oxidoreductase (cytochrome b-c1 complex, complex III, CIII) and cytochrome c oxidase (complex IV, CIV), that cooperate to transfer electrons derived from NADH and succinate to molecular oxygen, creating an electrochemical gradient over the inner membrane that drives transmembrane transport and the ATP synthase. The cytochrome b-c1 complex catalyzes electron transfer from ubiquinol to cytochrome c, linking this redox reaction to translocation of protons across the mitochondrial inner membrane, with protons being carried across the membrane as hydrogens on the quinol. In the process called Q cycle, 2 protons are consumed from the matrix, 4 protons are released into the intermembrane space and 2 electrons are passed to cytochrome c. The chain is Cytochrome b-c1 complex subunit 9 (Uqcr10) from Mus musculus (Mouse).